We begin with the raw amino-acid sequence, 55 residues long: Large ribosomal subunit protein bL33 (55 aa).

It belongs to the bacterial ribosomal protein bL33 family.

This Buchnera aphidicola subsp. Schizaphis graminum (strain Sg) protein is Large ribosomal subunit protein bL33.